The following is a 110-amino-acid chain: UPF0145 protein BLD_1357 (110 aa).

It belongs to the UPF0145 family.

In Bifidobacterium longum (strain DJO10A), this protein is UPF0145 protein BLD_1357.